The chain runs to 60 residues: Large ribosomal subunit protein uL30 (60 aa).

This sequence belongs to the universal ribosomal protein uL30 family. As to quaternary structure, part of the 50S ribosomal subunit.

The protein is Large ribosomal subunit protein uL30 of Dehalococcoides mccartyi (strain ATCC BAA-2100 / JCM 16839 / KCTC 5957 / BAV1).